A 58-amino-acid polypeptide reads, in one-letter code: Probable mRNA interferase HicA 2 (58 aa).

The protein belongs to the HicA mRNA interferase family. In terms of assembly, probably forms a complex with the cognate antitoxin HicB 2 which inhibits the mRNA interferase activity.

In terms of biological role, toxic component of a type II toxin-antitoxin (TA) system. A probable translation-independent mRNA interferase. The sequence is that of Probable mRNA interferase HicA 2 (hicA2) from Photorhabdus laumondii subsp. laumondii (strain DSM 15139 / CIP 105565 / TT01) (Photorhabdus luminescens subsp. laumondii).